The chain runs to 159 residues: NADH-quinone oxidoreductase subunit I (159 aa).

2 consecutive 4Fe-4S ferredoxin-type domains span residues 51–80 (RRYE…IEAD) and 90–119 (TRYD…EGPN). [4Fe-4S] cluster contacts are provided by C60, C63, C66, C70, C99, C102, C105, and C109.

Belongs to the complex I 23 kDa subunit family. As to quaternary structure, NDH-1 is composed of 14 different subunits. Subunits NuoA, H, J, K, L, M, N constitute the membrane sector of the complex. [4Fe-4S] cluster serves as cofactor.

The protein resides in the cell inner membrane. It carries out the reaction a quinone + NADH + 5 H(+)(in) = a quinol + NAD(+) + 4 H(+)(out). Its function is as follows. NDH-1 shuttles electrons from NADH, via FMN and iron-sulfur (Fe-S) centers, to quinones in the respiratory chain. The immediate electron acceptor for the enzyme in this species is believed to be ubiquinone. Couples the redox reaction to proton translocation (for every two electrons transferred, four hydrogen ions are translocated across the cytoplasmic membrane), and thus conserves the redox energy in a proton gradient. The polypeptide is NADH-quinone oxidoreductase subunit I (Rickettsia bellii (strain OSU 85-389)).